A 450-amino-acid chain; its full sequence is UDP-N-acetylmuramoylalanine--D-glutamate ligase (450 aa).

119-125 (GSNGKTT) contributes to the ATP binding site.

The protein belongs to the MurCDEF family.

The protein resides in the cytoplasm. It catalyses the reaction UDP-N-acetyl-alpha-D-muramoyl-L-alanine + D-glutamate + ATP = UDP-N-acetyl-alpha-D-muramoyl-L-alanyl-D-glutamate + ADP + phosphate + H(+). It participates in cell wall biogenesis; peptidoglycan biosynthesis. Its function is as follows. Cell wall formation. Catalyzes the addition of glutamate to the nucleotide precursor UDP-N-acetylmuramoyl-L-alanine (UMA). The chain is UDP-N-acetylmuramoylalanine--D-glutamate ligase from Streptococcus thermophilus (strain CNRZ 1066).